The chain runs to 173 residues: MVEMGSGAWLELGKGLWFILPAYIANLSACLFGGGRPLDFGKKLSDGRRLLGDGVTIRGFIVGVLAGAVVGLGEGLVVGDPWKAGDGFILGLGAMAGDAVGSFVKRRIGLERGAPAPVLDQLDFFVGAVLLYYLVYGWHPPGWVLVGLAILTLALHWLTNVIGYLLKLKEVPW.

Transmembrane regions (helical) follow at residues 15 to 35 (GLWF…FGGG), 59 to 79 (GFIV…LVVG), 84 to 104 (AGDG…GSFV), 118 to 138 (VLDQ…VYGW), and 142 to 162 (GWVL…TNVI).

The protein belongs to the CDP-archaeol synthase family. The cofactor is Mg(2+).

The protein resides in the cell membrane. It carries out the reaction 2,3-bis-O-(geranylgeranyl)-sn-glycerol 1-phosphate + CTP + H(+) = CDP-2,3-bis-O-(geranylgeranyl)-sn-glycerol + diphosphate. It participates in membrane lipid metabolism; glycerophospholipid metabolism. Functionally, catalyzes the formation of CDP-2,3-bis-(O-geranylgeranyl)-sn-glycerol (CDP-archaeol) from 2,3-bis-(O-geranylgeranyl)-sn-glycerol 1-phosphate (DGGGP) and CTP. This reaction is the third ether-bond-formation step in the biosynthesis of archaeal membrane lipids. This chain is CDP-archaeol synthase, found in Methanopyrus kandleri (strain AV19 / DSM 6324 / JCM 9639 / NBRC 100938).